A 205-amino-acid polypeptide reads, in one-letter code: Thiamine-phosphate synthase (205 aa).

Residues 35–39 (QYRDK) and asparagine 67 contribute to the 4-amino-2-methyl-5-(diphosphooxymethyl)pyrimidine site. Mg(2+) contacts are provided by aspartate 68 and aspartate 86. Threonine 105 contacts 4-amino-2-methyl-5-(diphosphooxymethyl)pyrimidine. 132–134 (SQT) contributes to the 2-[(2R,5Z)-2-carboxy-4-methylthiazol-5(2H)-ylidene]ethyl phosphate binding site. Lysine 135 provides a ligand contact to 4-amino-2-methyl-5-(diphosphooxymethyl)pyrimidine. Glycine 162 serves as a coordination point for 2-[(2R,5Z)-2-carboxy-4-methylthiazol-5(2H)-ylidene]ethyl phosphate.

It belongs to the thiamine-phosphate synthase family. Mg(2+) serves as cofactor.

The catalysed reaction is 2-[(2R,5Z)-2-carboxy-4-methylthiazol-5(2H)-ylidene]ethyl phosphate + 4-amino-2-methyl-5-(diphosphooxymethyl)pyrimidine + 2 H(+) = thiamine phosphate + CO2 + diphosphate. It catalyses the reaction 2-(2-carboxy-4-methylthiazol-5-yl)ethyl phosphate + 4-amino-2-methyl-5-(diphosphooxymethyl)pyrimidine + 2 H(+) = thiamine phosphate + CO2 + diphosphate. It carries out the reaction 4-methyl-5-(2-phosphooxyethyl)-thiazole + 4-amino-2-methyl-5-(diphosphooxymethyl)pyrimidine + H(+) = thiamine phosphate + diphosphate. Its pathway is cofactor biosynthesis; thiamine diphosphate biosynthesis; thiamine phosphate from 4-amino-2-methyl-5-diphosphomethylpyrimidine and 4-methyl-5-(2-phosphoethyl)-thiazole: step 1/1. Its function is as follows. Condenses 4-methyl-5-(beta-hydroxyethyl)thiazole monophosphate (THZ-P) and 2-methyl-4-amino-5-hydroxymethyl pyrimidine pyrophosphate (HMP-PP) to form thiamine monophosphate (TMP). The chain is Thiamine-phosphate synthase from Pseudomonas syringae pv. tomato (strain ATCC BAA-871 / DC3000).